Consider the following 432-residue polypeptide: Histidine--tRNA ligase (432 aa).

Belongs to the class-II aminoacyl-tRNA synthetase family.

The protein resides in the cytoplasm. It carries out the reaction tRNA(His) + L-histidine + ATP = L-histidyl-tRNA(His) + AMP + diphosphate + H(+). The chain is Histidine--tRNA ligase from Pyrococcus furiosus (strain ATCC 43587 / DSM 3638 / JCM 8422 / Vc1).